The primary structure comprises 203 residues: Glycerol-3-phosphate acyltransferase (203 aa).

The next 6 membrane-spanning stretches (helical) occupy residues Asn3–Ala23, Ile61–Leu81, Val87–Phe107, Gly118–Val138, Ile144–His164, and Thr172–Val192.

Belongs to the PlsY family. As to quaternary structure, probably interacts with PlsX.

The protein localises to the cell inner membrane. It carries out the reaction an acyl phosphate + sn-glycerol 3-phosphate = a 1-acyl-sn-glycero-3-phosphate + phosphate. Its pathway is lipid metabolism; phospholipid metabolism. In terms of biological role, catalyzes the transfer of an acyl group from acyl-phosphate (acyl-PO(4)) to glycerol-3-phosphate (G3P) to form lysophosphatidic acid (LPA). This enzyme utilizes acyl-phosphate as fatty acyl donor, but not acyl-CoA or acyl-ACP. The chain is Glycerol-3-phosphate acyltransferase from Campylobacter concisus (strain 13826).